Consider the following 223-residue polypeptide: Histone H1.5 (223 aa).

The segment covering 1–14 has biased composition (low complexity); that stretch reads MSETAPAETAAPAP. Positions 1 to 56 are disordered; the sequence is MSETAPAETAAPAPVEKSPAKKKTTKKAGAAKRKATGPPVSELITKAVSASKERGG. At S2 the chain carries N-acetylserine. S2 carries the phosphoserine modification. K17 is modified (N6-acetyllysine). S18 bears the Phosphoserine mark. A compositionally biased stretch (basic residues) spans 20–35; that stretch reads AKKKTTKKAGAAKRKA. K27 is subject to N6-methyllysine. K34 bears the N6-(beta-hydroxybutyryl)lysine; alternate mark. Position 34 is an N6-succinyllysine; alternate (K34). Residue T36 is modified to Phosphothreonine. The H15 domain maps to 36–109; the sequence is TGPPVSELIT…GASGSFKLNK (74 aa). Residue K46 is modified to N6-acetyllysine. K52 bears the N6-(beta-hydroxybutyryl)lysine mark. At R54 the chain carries Citrulline. An N6-(beta-hydroxybutyryl)lysine modification is found at K64. K75 is subject to N6-acetyllysine. N6-(beta-hydroxybutyryl)lysine occurs at positions 85, 90, and 106. The segment at 91–223 is disordered; sequence GTLVQTKGTG…KAKKAVSKKK (133 aa). Positions 119–130 are enriched in basic residues; it reads KAKKTGAAKAKK. Phosphothreonine occurs at positions 135 and 152. Over residues 137 to 158 the composition is skewed to basic residues; the sequence is KKPKKTAGAKKTVKKTPKKAKK. An N6-acetyllysine modification is found at K165. Over residues 166-184 the composition is skewed to basic residues; it reads KVAKSPKKAKAAAKPKKAA. Residues S170 and S186 each carry the phosphoserine modification. Over residues 191-223 the composition is skewed to basic residues; sequence KAVKSKASKPKVTKPKTAKPKAAKAKKAVSKKK.

Belongs to the histone H1/H5 family. As to quaternary structure, interacts with MSX1. Post-translationally, H1 histones are progressively phosphorylated during the cell cycle, becoming maximally phosphorylated during late G2 phase and M phase, and being dephosphorylated sharply thereafter. Citrullination at Arg-54 (H1R54ci) by PADI4 takes place within the DNA-binding site of H1 and results in its displacement from chromatin and global chromatin decondensation, thereby promoting pluripotency and stem cell maintenance. In terms of processing, hydroxybutyrylation of histones is induced by starvation.

It localises to the nucleus. The protein resides in the chromosome. Histone H1 protein binds to linker DNA between nucleosomes forming the macromolecular structure known as the chromatin fiber. Histones H1 are necessary for the condensation of nucleosome chains into higher-order structured fibers. Also acts as a regulator of individual gene transcription through chromatin remodeling, nucleosome spacing and DNA methylation. The chain is Histone H1.5 (H1-5) from Mus musculus (Mouse).